The primary structure comprises 113 residues: Nitrogenase-stabilizing/protective protein NifW (113 aa).

Belongs to the NifW family. In terms of assembly, homotrimer; associates with NifD.

May protect the nitrogenase Fe-Mo protein from oxidative damage. The protein is Nitrogenase-stabilizing/protective protein NifW of Polaromonas naphthalenivorans (strain CJ2).